The following is a 188-amino-acid chain: Adenine phosphoribosyltransferase (188 aa).

This sequence belongs to the purine/pyrimidine phosphoribosyltransferase family. Homodimer.

The protein resides in the cytoplasm. The catalysed reaction is AMP + diphosphate = 5-phospho-alpha-D-ribose 1-diphosphate + adenine. The protein operates within purine metabolism; AMP biosynthesis via salvage pathway; AMP from adenine: step 1/1. Functionally, catalyzes a salvage reaction resulting in the formation of AMP, that is energically less costly than de novo synthesis. In Salinispora arenicola (strain CNS-205), this protein is Adenine phosphoribosyltransferase.